Reading from the N-terminus, the 1592-residue chain is Laminin subunit gamma-1 (1592 aa).

The signal sequence occupies residues 1–19 (MRAPVLAVLAVLLLGTVRA). The region spanning 29-268 (SPQRCMPEFV…AISDFAVGGR (240 aa)) is the Laminin N-terminal domain. Residues N43 and N117 are each glycosylated (N-linked (GlcNAc...) asparagine). Intrachain disulfides connect C269/C278, C271/C288, C290/C299, C302/C322, C325/C334, C327/C350, C353/C362, C365/C378, C381/C393, C383/C399, C401/C410, C413/C425, C428/C439, C430/C446, C448/C457, and C460/C475. 4 Laminin EGF-like domains span residues 269 to 324 (CKCN…ECLP), 325 to 380 (CNCN…PCHA), 381 to 427 (CQCN…GCRP), and 428 to 477 (CACN…GCTP). Residues 504–672 (SGVEGWTAQQ…AGPSAPWVEI (169 aa)) enclose the Laminin IV type A domain. N559 and N633 each carry an N-linked (GlcNAc...) asparagine glycan. 24 disulfides stabilise this stretch: C707–C716, C709–C723, C725–C734, C737–C753, C756–C764, C758–C775, C778–C787, C790–C808, C811–C825, C813–C832, C835–C844, C847–C864, C867–C881, C869–C888, C890–C899, C902–C915, C918–C930, C920–C937, C939–C948, C951–C963, C966–C978, C968–C984, C986–C995, and C998–C1011. 6 consecutive Laminin EGF-like domains span residues 707–755 (CTCN…DCQP), 756–810 (CPCP…PCRI), 811–866 (CECS…KCRA), 867–917 (CSCN…GCER), 918–965 (CDCH…GCKP), and 966–1013 (CDCD…GCQE). N1005, N1041, N1048, N1090, N1144, N1158, N1188, N1206, N1253, N1363, and N1386 each carry an N-linked (GlcNAc...) asparagine glycan. Residues 1013–1592 (ECPACYRLVK…CYNTPIIEKP (580 aa)) are domain II and I. Residues 1018–1477 (YRLVKDKVNE…DEKMAEMASN (460 aa)) are a coiled coil. Positions 1456-1472 (NQLKKKQAEAESDEKMA) are enriched in basic and acidic residues. A disordered region spans residues 1456–1489 (NQLKKKQAEAESDEKMAEMASNATKDAESNANNS). Positions 1476-1489 (SNATKDAESNANNS) are enriched in polar residues. N-linked (GlcNAc...) asparagine glycosylation is found at N1477 and N1487. A coiled-coil region spans residues 1515–1579 (VGQLTVLEKT…ANLEDIKNTL (65 aa)).

In terms of assembly, laminin is a complex glycoprotein, consisting of three different polypeptide chains (alpha, beta, gamma), which are bound to each other by disulfide bonds into a cross-shaped molecule comprising one long and three short arms with globules at each end.

It is found in the secreted. It localises to the extracellular space. The protein localises to the extracellular matrix. The protein resides in the basement membrane. In terms of biological role, binding to cells via a high affinity receptor, laminin is thought to mediate the attachment, migration and organization of cells into tissues during embryonic development by interacting with other extracellular matrix components. The polypeptide is Laminin subunit gamma-1 (lamc1) (Xenopus tropicalis (Western clawed frog)).